The following is a 585-amino-acid chain: MENLQSMPEVQKIISLGKANGEVSYDDINEILPDKILNSEKIDDFFTLLHEMGIEIVEEYTRNTLEPASTLVPKDDSKPARKKKESSASTSGSEDPIKLYLREIGKVSLISGETEVFLAKRIEKGEKIIEETILSSSILRANYIKLLPKIRSKKIKVYDLIRVDKMYALNAEEAHKLEELFFKNILVIQEQEKVLQEAVSKIRKYSETSKKYKEFKEKIDASTEIIHNAIRELGVSQKEIQKISQKIKSMVFRIKEIDRHFLKIKAQYGQDVRDIKAFNRFIEKNEKLDDIEVKMGVNIDEVREVIKDIRNNERKLRRMEQEAGSTVQEIKDWGEKIIKGEREISQAKKELVKANLRLVVSIAKRYANRGMHFFDLIQEGNIGLIKAVDKFEYKKGYKFSTYATWWIRQAITRAISDQARTIRVPVHMIEQVNKVIRETRLFIQEFGRDPNNEEIAERLGWPVQKVKMVKNVAREPISLEIPVGSEEDSELGDFIPDTEVETPVNAAASSILAEQIRQVLHTLPAREQKVIRMRFGLDDGYPQTLEEVGYQFKVTRERIRQIEAKALRRLRHPSRSKKLKDYIDG.

Positions 67-93 are disordered; sequence PASTLVPKDDSKPARKKKESSASTSGS. The segment at 351 to 421 is sigma-70 factor domain-2; it reads LVKANLRLVV…TRAISDQART (71 aa). An Interaction with polymerase core subunit RpoC motif is present at residues 375–378; the sequence is DLIQ. The interval 430-506 is sigma-70 factor domain-3; the sequence is EQVNKVIRET…DTEVETPVNA (77 aa). Positions 519–572 are sigma-70 factor domain-4; the sequence is VLHTLPAREQKVIRMRFGLDDGYPQTLEEVGYQFKVTRERIRQIEAKALRRLRH. The H-T-H motif DNA-binding region spans 545–564; the sequence is LEEVGYQFKVTRERIRQIEA.

The protein belongs to the sigma-70 factor family. RpoD/SigA subfamily. In terms of assembly, interacts transiently with the RNA polymerase catalytic core.

It localises to the cytoplasm. Functionally, sigma factors are initiation factors that promote the attachment of RNA polymerase to specific initiation sites and are then released. This sigma factor is the primary sigma factor during exponential growth. In Leptospira interrogans serogroup Icterohaemorrhagiae serovar copenhageni (strain Fiocruz L1-130), this protein is RNA polymerase sigma factor RpoD.